The chain runs to 153 residues: Small ribosomal subunit protein bS6 (153 aa).

Positions 94 to 153 are disordered; it reads EAHEEGPSAMMQKRDRDDRPRRDGDRPDRGPREDRGPRPPREGGFGDREDRPRRPREDRA.

Belongs to the bacterial ribosomal protein bS6 family.

Functionally, binds together with bS18 to 16S ribosomal RNA. This is Small ribosomal subunit protein bS6 from Agrobacterium fabrum (strain C58 / ATCC 33970) (Agrobacterium tumefaciens (strain C58)).